Consider the following 167-residue polypeptide: Lipoprotein signal peptidase (167 aa).

3 helical membrane-spanning segments follow: residues 10 to 30, 68 to 88, and 98 to 118; these read LIWL…KAWV, WQMW…TFWL, and SALP…DRFL. Residues D124 and D142 contribute to the active site. A helical transmembrane segment spans residues 138–158; the sequence is FNLADSAIVAGAIGIGLLSLF.

This sequence belongs to the peptidase A8 family.

The protein resides in the cell inner membrane. It carries out the reaction Release of signal peptides from bacterial membrane prolipoproteins. Hydrolyzes -Xaa-Yaa-Zaa-|-(S,diacylglyceryl)Cys-, in which Xaa is hydrophobic (preferably Leu), and Yaa (Ala or Ser) and Zaa (Gly or Ala) have small, neutral side chains.. Its pathway is protein modification; lipoprotein biosynthesis (signal peptide cleavage). This protein specifically catalyzes the removal of signal peptides from prolipoproteins. This is Lipoprotein signal peptidase from Xylella fastidiosa (strain M23).